Consider the following 505-residue polypeptide: ATP synthase subunit alpha (505 aa).

An ATP-binding site is contributed by 169 to 176 (GDRQIGKT).

It belongs to the ATPase alpha/beta chains family. In terms of assembly, F-type ATPases have 2 components, CF(1) - the catalytic core - and CF(0) - the membrane proton channel. CF(1) has five subunits: alpha(3), beta(3), gamma(1), delta(1), epsilon(1). CF(0) has three main subunits: a(1), b(2) and c(9-12). The alpha and beta chains form an alternating ring which encloses part of the gamma chain. CF(1) is attached to CF(0) by a central stalk formed by the gamma and epsilon chains, while a peripheral stalk is formed by the delta and b chains.

The protein resides in the cell inner membrane. It carries out the reaction ATP + H2O + 4 H(+)(in) = ADP + phosphate + 5 H(+)(out). Functionally, produces ATP from ADP in the presence of a proton gradient across the membrane. The alpha chain is a regulatory subunit. This is ATP synthase subunit alpha from Desulfosudis oleivorans (strain DSM 6200 / JCM 39069 / Hxd3) (Desulfococcus oleovorans).